The chain runs to 72 residues: Omega-conotoxin-like S6.6 (72 aa).

The N-terminal stretch at 1-22 (MKLTCVVIVAVLLLTACQLLTA) is a signal peptide. Residues 23-45 (DDSRGTQKHRALRSDTKLSMSTR) constitute a propeptide that is removed on maturation. 3 disulfides stabilise this stretch: cysteine 46/cysteine 61, cysteine 53/cysteine 65, and cysteine 60/cysteine 71. Position 71 is a cysteine amide (cysteine 71).

Belongs to the conotoxin O1 superfamily. Expressed by the venom duct.

The protein localises to the secreted. Functionally, omega-conotoxins act at presynaptic membranes, they bind and block voltage-gated calcium channels (Cav). This toxin blocks N-, P- and Q-type calcium channels. In Conus striatus (Striated cone), this protein is Omega-conotoxin-like S6.6.